Reading from the N-terminus, the 293-residue chain is Movement protein BC1 (293 aa).

Positions 207–228 (SWASRSTIGPSPSYAGSDQGDA) are disordered. Positions 209–222 (ASRSTIGPSPSYAG) are enriched in polar residues.

It belongs to the begomovirus movement protein BC1 family. As to quaternary structure, binds to dimeric supercoiled plasmid DNA. In terms of processing, phosphorylated.

The protein resides in the host cell membrane. Its subcellular location is the host microsome membrane. The protein localises to the host endoplasmic reticulum membrane. In terms of biological role, movement protein involved in the cell-to-cell and systemic transport of viral genomic DNA. Begomoviruses use 2 proteins to transport their DNA from cell to cell. The nuclear shuttle protein (NSP) shuttles it between nucleus and cytoplasm and the movement protein (MP) probably transports the DNA-NSP complex to the cell periphery and facilitates further movement across the cell wall. The polypeptide is Movement protein BC1 (Tomato golden mosaic virus (strain Yellow vein) (TGMV)).